An 845-amino-acid chain; its full sequence is MSKLQQFPLSKGWSFRDSEDTSEDAWMPVPVVPSVVHQDLQANSKLKDPYIGFNELEARWVNEKSWTYKTVFQKPAAPAGSCIVLAFDGLDTFAKVKLDGNVILENDNMFLARRVDVTKALEAEGDHVLEIDFDCAFLRAKELRKQDPKHNWASFNGDPSRLSVRKAQYHWGWDWGPVLMTAGIWRDVRLEVYSARVADLWTEVQLASDHQSAQVTAFAEVESVHSGSHRACFTLSLHGQEIAREEIGVTENGTAKATFDVKEPSLWWPHGYGDATLYEVSVSLRKEQEELHKVSKKFGIRTAEVVQRPDKHGKSFFFRVNGVDIFCGGSCWIPADNLLPSITAERYRKWIELMVHGRQVMIRVWGGGIYEDNSFYDACDELGVLVWQDFMFGCGNYPTWPNLLESIRKESVYNVRRLRHHPSIVIWVGNNEDYQVQEQAGLTYNYEDKDPESWLKTDFPARYIYEKLLPEVVQEFSPSTFYHPGSPWGDGKTTSDPTVGDMHQWNVWHGTQEKYQIFDTLGGRFNSEFGMEAFPHMSTIDYFVENEADKYPQSHVLDFHNKADGHERRIATYLVENLRTATDLETHIYLTQVVQAETMMFGYRGWRRQWGDERHCGGALLWQLNDCWPTISWAIVDYFLRPKPAFYAVARVLNPIAVGVRREHHDWSVTHAQPPKTSKFELWVASSRQQEVQGTVELRFLSVNTGLEVRERIVHENVSIVPNGTTNLIVDGLIDHRVHSEPHVLAARIWVDGQLVARDVDWPQPFKYLDLSDRGLEIKKISESEDEQTLLISTQKPVKCLVFEEREGVRISDSAMDIVPGDDQRVTIKGLKPGDAPLKYKFLGQ.

Positions 1–20 (MSKLQQFPLSKGWSFRDSED) are disordered. An N-linked (GlcNAc...) asparagine glycan is attached at N252. E432 serves as the catalytic Proton donor. Residues N717 and N723 are each glycosylated (N-linked (GlcNAc...) asparagine).

The protein belongs to the glycosyl hydrolase 2 family. Beta-mannosidase B subfamily.

The catalysed reaction is Hydrolysis of terminal, non-reducing beta-D-mannose residues in beta-D-mannosides.. The protein operates within glycan metabolism; N-glycan degradation. Functionally, exoglycosidase that cleaves the single beta-linked mannose residue from the non-reducing end of beta-mannosidic oligosaccharides of various complexity and length. Prefers mannobiose over mannotriose and has no activity against polymeric mannan. Is also severely restricted by galactosyl substitutions at the +1 subsite. The chain is Beta-mannosidase B (mndB) from Neosartorya fischeri (strain ATCC 1020 / DSM 3700 / CBS 544.65 / FGSC A1164 / JCM 1740 / NRRL 181 / WB 181) (Aspergillus fischerianus).